Consider the following 485-residue polypeptide: MVSSLSRNGNSHHNGVNVAITSGFSTKLAPLPNGPLFGTDGIRGKAGDLLTAPFALELGFWAGQVLKANKVTPGPVIIGQDSRNSSDMLAMAMAAGLTSAGLEVWNLGLCPTPCVAHLTRISQAMGGIMISASHNPPEDNGIKFFNHEGTKLSQTLAQQIEDGLRGHLSFDRDRNREWGKTYHQANLVDTYCQFLQETLPENLDLQGMRVVLDLAWGASVEVAPKLFKALGAEVICLHDRPDGNRINVNCGSTHLDLLQQAIKEHQADLGFAFDGDADRVMAVDSQGRVVDGDYILYLWGKHLLEQGKLPHNLLIGTVMANLGFERAWEALGGQLMRTAVGDRHVQAQMWETGAILGGEQSGHIICHHHSFSGDGVQTALHLAALVRQSGESLATLVNESFQTYPQILRNIRVEDRDRRRYWQECTPVMEAVNQAEAAMGNTGRILVRPSGTEPLIRVMVESCSADDANYWVNYLVNVVEQHLAN.

The active-site Phosphoserine intermediate is the Ser133. Positions 133, 274, 276, and 278 each coordinate Mg(2+). Ser133 bears the Phosphoserine mark.

The protein belongs to the phosphohexose mutase family. Requires Mg(2+) as cofactor. In terms of processing, activated by phosphorylation.

It carries out the reaction alpha-D-glucosamine 1-phosphate = D-glucosamine 6-phosphate. In terms of biological role, catalyzes the conversion of glucosamine-6-phosphate to glucosamine-1-phosphate. The sequence is that of Phosphoglucosamine mutase from Rippkaea orientalis (strain PCC 8801 / RF-1) (Cyanothece sp. (strain PCC 8801)).